Here is a 222-residue protein sequence, read N- to C-terminus: Probable transaldolase (222 aa).

K91 acts as the Schiff-base intermediate with substrate in catalysis.

This sequence belongs to the transaldolase family. Type 3B subfamily.

The protein resides in the cytoplasm. It catalyses the reaction D-sedoheptulose 7-phosphate + D-glyceraldehyde 3-phosphate = D-erythrose 4-phosphate + beta-D-fructose 6-phosphate. It functions in the pathway carbohydrate degradation; pentose phosphate pathway; D-glyceraldehyde 3-phosphate and beta-D-fructose 6-phosphate from D-ribose 5-phosphate and D-xylulose 5-phosphate (non-oxidative stage): step 2/3. Its function is as follows. Transaldolase is important for the balance of metabolites in the pentose-phosphate pathway. The sequence is that of Probable transaldolase from Chlorobium luteolum (strain DSM 273 / BCRC 81028 / 2530) (Pelodictyon luteolum).